We begin with the raw amino-acid sequence, 415 residues long: Type II methyltransferase M.DdeI (415 aa).

The region spanning 1-373 (MNIIDLFAGC…ERISWYFENI (373 aa)) is the SAM-dependent MTase C5-type domain. C76 is an active-site residue.

The protein belongs to the class I-like SAM-binding methyltransferase superfamily. C5-methyltransferase family.

The enzyme catalyses a 2'-deoxycytidine in DNA + S-adenosyl-L-methionine = a 5-methyl-2'-deoxycytidine in DNA + S-adenosyl-L-homocysteine + H(+). Functionally, a methylase that recognizes the double-stranded sequence 5'-CTNAG-3', methylates C-1 on both strands, and protects the DNA from cleavage by the DdeI endonuclease. The chain is Type II methyltransferase M.DdeI (ddeIM) from Desulfomicrobium norvegicum (strain DSM 1741 / NCIMB 8310) (Desulfovibrio baculatus (strain Norway 4)).